The chain runs to 161 residues: MTGLPFRIGYGEDAHRLAPGLPLVLGGVAIPHAELGAVAHSDGDAVLHAVADALLSGLALGDIGQYFPDTAAEWKGMDSRRILAKALELVEERGYRPVNVALVVTLDRPKLGPLRADIAASVAELLGLPAGEVGVSFKTSEGLALEHVQTRVTVLLGRVDD.

Positions 13 and 15 each coordinate a divalent metal cation. 4-CDP-2-C-methyl-D-erythritol 2-phosphate is bound by residues 13 to 15 (DAH) and 40 to 41 (HS). Residue His-48 participates in a divalent metal cation binding. 62 to 64 (DIG) is a 4-CDP-2-C-methyl-D-erythritol 2-phosphate binding site.

Belongs to the IspF family. In terms of assembly, homotrimer. The cofactor is a divalent metal cation.

It carries out the reaction 4-CDP-2-C-methyl-D-erythritol 2-phosphate = 2-C-methyl-D-erythritol 2,4-cyclic diphosphate + CMP. Its pathway is isoprenoid biosynthesis; isopentenyl diphosphate biosynthesis via DXP pathway; isopentenyl diphosphate from 1-deoxy-D-xylulose 5-phosphate: step 4/6. In terms of biological role, involved in the biosynthesis of isopentenyl diphosphate (IPP) and dimethylallyl diphosphate (DMAPP), two major building blocks of isoprenoid compounds. Catalyzes the conversion of 4-diphosphocytidyl-2-C-methyl-D-erythritol 2-phosphate (CDP-ME2P) to 2-C-methyl-D-erythritol 2,4-cyclodiphosphate (ME-CPP) with a corresponding release of cytidine 5-monophosphate (CMP). This chain is 2-C-methyl-D-erythritol 2,4-cyclodiphosphate synthase, found in Deinococcus radiodurans (strain ATCC 13939 / DSM 20539 / JCM 16871 / CCUG 27074 / LMG 4051 / NBRC 15346 / NCIMB 9279 / VKM B-1422 / R1).